The sequence spans 157 residues: MQTVHYLSRMCYTKLLMDSTRPLTVQQLSDKLTVPVVDLLLPCRFCSRFLTYLELREFDYKHLQLIWTEEDFVFACCSGCAYASAQFEIQQFYQLTVYGREIEQEEQRPIGQICIRCQYCLKSLDLIEKLDICSFNQPFHKVRNHWKGRCRHCKEIE.

Zinc fingers lie at residues 43–80 and 117–153; these read CRFC…CSGC and CQYC…CRHC.

The protein belongs to the papillomaviridae E6 protein family. Forms homodimers. Interacts with ubiquitin-protein ligase UBE3A/E6-AP; this interaction stimulates UBE3A ubiquitin activity. Interacts with host BAK1.

It localises to the host cytoplasm. Its subcellular location is the host nucleus. Its function is as follows. Plays a major role in the induction and maintenance of cellular transformation. E6 associates with host UBE3A/E6-AP ubiquitin-protein ligase and modulates its activity. Protects host keratinocytes from apoptosis by mediating the degradation of host BAK1. May also inhibit host immune response. The protein is Protein E6 of Human papillomavirus 23.